A 1382-amino-acid polypeptide reads, in one-letter code: ATP-dependent RNA helicase TDRD9 (1382 aa).

A disordered region spans residues 36 to 62 (AAREEVQRQDVAPGAGPAAQAPALAQA). Low complexity predominate over residues 47-62 (APGAGPAAQAPALAQA). One can recognise a Helicase ATP-binding domain in the interval 142–308 (VSLIESNSVV…FAVPVQNKMN (167 aa)). 155-162 (GATGSGKS) contacts ATP. Positions 254 to 257 (DEVH) match the DEAH box motif. The region spanning 377 to 544 (SGAQFVLERS…ILKVKLLDMG (168 aa)) is the Helicase C-terminal domain. Positions 944–1004 (HPHPDLVCLA…MEIPCQFLEL (61 aa)) constitute a Tudor domain.

Belongs to the DEAD box helicase family. DEAH subfamily. Interacts with piRNA-associated proteins PIWIL1 and PIWIL4.

It localises to the cytoplasm. The protein localises to the nucleus. It carries out the reaction ATP + H2O = ADP + phosphate + H(+). ATP-binding RNA helicase required during spermatogenesis. Required to repress transposable elements and prevent their mobilization, which is essential for the germline integrity. Acts via the piRNA metabolic process, which mediates the repression of transposable elements during meiosis by forming complexes composed of piRNAs and Piwi proteins and governs the methylation and subsequent repression of transposons. Acts downstream of piRNA biogenesis: exclusively required for transposon silencing in the nucleus, suggesting that it acts as a nuclear effector in the nucleus together with PIWIL4. This chain is ATP-dependent RNA helicase TDRD9, found in Homo sapiens (Human).